Reading from the N-terminus, the 103-residue chain is Small ribosomal subunit protein uS10 (103 aa).

The protein belongs to the universal ribosomal protein uS10 family. Part of the 30S ribosomal subunit.

In terms of biological role, involved in the binding of tRNA to the ribosomes. This is Small ribosomal subunit protein uS10 from Salinibacter ruber (strain DSM 13855 / M31).